Here is a 405-residue protein sequence, read N- to C-terminus: 5-azacytidine-induced protein 2 (405 aa).

Residues 1 to 198 (MDTLVEDDIC…TELQKARQTG (198 aa)) are homodimerization. Positions 40–197 (ALVTAYEDIK…RTELQKARQT (158 aa)) form a coiled coil. An interaction with TBK1 and IKBKE region spans residues 229–270 (SDNMQHAYWELKREMSNLHLVTQVQAELLRKLKTSAAVKKAC). Phosphoserine is present on residues serine 331 and serine 366. The tract at residues 357–377 (LEDNSWVFPSPPKSSETAFGE) is disordered.

As to quaternary structure, homodimer. Interacts with IKBKE and TBK1. Interacts with TICAM1. Interacts with TAX1BP1. Interacts with CALCOCO2. Post-translationally, ubiquitinated via 'Lys-48'-linked polyubiquitination by TRIM38, leading to its degradation. As to expression, testis, ovary, heart, lung, kidney and brain. Expressed mainly in the spermatocytes or spermatids in the testis.

It localises to the cytoplasm. Its function is as follows. Adapter protein which binds TBK1 and IKBKE playing a role in antiviral innate immunity. Activates serine/threonine-protein kinase TBK1 and facilitates its oligomerization. Enhances the phosphorylation of NF-kappa-B p65 subunit RELA by TBK1. Promotes TBK1-induced as well as TNF-alpha or PMA-induced activation of NF-kappa-B. Participates in IFNB promoter activation via TICAM1. The chain is 5-azacytidine-induced protein 2 (Azi2) from Mus musculus (Mouse).